We begin with the raw amino-acid sequence, 341 residues long: uncharacterized protein (341 aa).

Positions 125–146 (DTVKHNGSGPRPEQASSHVHYS) are disordered.

The protein belongs to the cycloisomerase 2 family.

This is an uncharacterized protein from Lactococcus lactis subsp. cremoris (strain MG1363).